The primary structure comprises 181 residues: Large ribosomal subunit protein uL10 (181 aa).

Belongs to the universal ribosomal protein uL10 family. Part of the ribosomal stalk of the 50S ribosomal subunit. The N-terminus interacts with L11 and the large rRNA to form the base of the stalk. The C-terminus forms an elongated spine to which L12 dimers bind in a sequential fashion forming a multimeric L10(L12)X complex.

In terms of biological role, forms part of the ribosomal stalk, playing a central role in the interaction of the ribosome with GTP-bound translation factors. This Nostoc sp. (strain PCC 7120 / SAG 25.82 / UTEX 2576) protein is Large ribosomal subunit protein uL10.